The primary structure comprises 758 residues: Relaxin receptor 1 (758 aa).

At 1 to 409 (MTSGPFFFCI…ENLLASIIQR (409 aa)) the chain is on the extracellular side. Residues 26–63 (SCPLGSFPCGNMSRCLPQLLHCNGVDDCGNRADEDHCG) form the LDL-receptor class A domain. Cystine bridges form between Cys27–Cys40, Cys34–Cys53, and Cys47–Cys62. N-linked (GlcNAc...) asparagine glycosylation is present at Asn36. Ca(2+)-binding residues include Leu45, Asn48, Val50, Asp52, Asp58, and Glu59. A glycan (N-linked (GlcNAc...) asparagine) is linked at Asn127. LRR repeat units lie at residues 127-148 (NVTV…GFRK), 151-172 (ELQK…AFRG), 175-196 (SLTK…VFED), 199-220 (RLEW…TFYG), 223-244 (SLIL…PLCQ), 248-269 (RLHW…TFIS), 272-293 (NLTV…AFTH), 296-317 (KLDE…IFKD), 320-341 (ELSQ…QFDC), and 344-365 (KLKS…MFRP). Residues Asn264 and Asn272 are each glycosylated (N-linked (GlcNAc...) asparagine). Asn325 carries an N-linked (GlcNAc...) asparagine glycan. A glycan (N-linked (GlcNAc...) asparagine) is linked at Asn368. The helical transmembrane segment at 410 to 430 (VFVWVVSAITCFGNIFVICMR) threads the bilayer. At 431–443 (PYIRSENKLHAMS) the chain is on the cytoplasmic side. A helical membrane pass occupies residues 444–464 (IISLCCADCLMGVYLFVIGAF). Over 465-486 (DLKFRGEYNKHAQPWMESVHCQ) the chain is Extracellular. Residues Cys485 and Cys563 are joined by a disulfide bond. Residues 487–507 (FMGSLAILSTEVSVLLLTFLT) traverse the membrane as a helical segment. Topologically, residues 508 to 527 (LEKYICIVYPFRCLRPRKCR) are cytoplasmic. The chain crosses the membrane as a helical span at residues 528–548 (TITVLIFIWIIGFIVAFAPLG). Topologically, residues 549–577 (NKEFFKNYYGTNGVCFPLHSEDTGSTGAQ) are extracellular. The chain crosses the membrane as a helical span at residues 578–598 (IYSVVIFLGINLVAFIIIVFS). The Cytoplasmic portion of the chain corresponds to 599-629 (YGSMFYSVHQSSVTVTEIQKQVKKEVVLAKR). The helical transmembrane segment at 630–650 (FFFIVFTDALCWIPIFILKFL) threads the bilayer. Residue Ser651 is a topological domain, extracellular. Residues 652–672 (LLQVEIPDSITSWVVIFILPI) traverse the membrane as a helical segment. At 673-758 (NSALNPIIYT…SQSSRLNSYS (86 aa)) the chain is on the cytoplasmic side.

Belongs to the G-protein coupled receptor 1 family. In terms of assembly, interacts with C1QTNF8.

It localises to the cell membrane. Its function is as follows. Receptor for relaxins. The activity of this receptor is mediated by G proteins leading to stimulation of adenylate cyclase and an increase of cAMP. Binding of the ligand may also activate a tyrosine kinase pathway that inhibits the activity of a phosphodiesterase that degrades cAMP. This chain is Relaxin receptor 1 (Rxfp1), found in Mus musculus (Mouse).